The following is a 229-amino-acid chain: VLSDQGALFEPCSTQDIACLSRATQQFLEKACRGVPEYDIRPIDPLIISSLDVAAYDDIGLIFHFKNLNITGLKNQKISDFRMDTTRKSVLLKTQADLNVVADVVIELSKQSKSFAGVMNIQASIIGGAKYSYDLQDDSKGVKHFEVGQETISCESIGEPAVNLNPELADALLKDPDTTHYRKDYEAHRVSIRQRSLCKIVELCYVDVVHNIRAVAKILPSTAFFTDVN.

The signal sequence occupies residues 1 to 3; that stretch reads VLS.

It is found in the secreted. Its function is as follows. Prevents juvenile hormone from being hydrolyzed by general esterases by combining with it specifically. The sequence is that of Juvenile hormone-binding protein (JHBP) from Manduca sexta (Tobacco hawkmoth).